The chain runs to 540 residues: Na(+)/H(+) antiporter NhaS2 (540 aa).

Transmembrane regions (helical) follow at residues 29 to 49, 71 to 91, 117 to 137, 138 to 158, 207 to 227, 256 to 276, 296 to 316, 323 to 343, 358 to 378, and 389 to 409; these read ITTL…VALV, GLSV…ILIF, VVIS…LAWV, TAAG…IAAF, IFVA…LCVG, LGVS…NLAL, FGVN…SILL, LIAI…LLYL, VLIA…ALPL, and LVFS…PWVV.

Belongs to the monovalent cation:proton antiporter 1 (CPA1) transporter (TC 2.A.36) family.

The protein localises to the cell membrane. Required for Na(+) uptake into the cell, especially at low external Na(+) concentrations or low Na(+)/K(+) ratios. May be part of a sodium cycle that permits re-entry of sodium into the cell. In Synechocystis sp. (strain ATCC 27184 / PCC 6803 / Kazusa), this protein is Na(+)/H(+) antiporter NhaS2 (nhaS2).